The following is a 159-amino-acid chain: Phosphopantetheine adenylyltransferase (159 aa).

Residue S10 coordinates substrate. Residues 10–11 (SF) and H18 each bind ATP. Positions 42, 77, and 91 each coordinate substrate. Residues 92 to 94 (GIR), E102, and 126 to 132 (NAHVSSS) contribute to the ATP site.

Belongs to the bacterial CoaD family. Homohexamer. Mg(2+) is required as a cofactor.

It is found in the cytoplasm. The enzyme catalyses (R)-4'-phosphopantetheine + ATP + H(+) = 3'-dephospho-CoA + diphosphate. Its pathway is cofactor biosynthesis; coenzyme A biosynthesis; CoA from (R)-pantothenate: step 4/5. Its function is as follows. Reversibly transfers an adenylyl group from ATP to 4'-phosphopantetheine, yielding dephospho-CoA (dPCoA) and pyrophosphate. The protein is Phosphopantetheine adenylyltransferase of Leifsonia xyli subsp. xyli (strain CTCB07).